The primary structure comprises 236 residues: Small ribosomal subunit protein uS3 (236 aa).

The region spanning 39–107 (IREFLTEELK…DTSLNIVEVR (69 aa)) is the KH type-2 domain. Residues 214–236 (ASERRAVEGDNQGSSSNRRRENA) are disordered.

Belongs to the universal ribosomal protein uS3 family. Part of the 30S ribosomal subunit. Forms a tight complex with proteins S10 and S14.

Binds the lower part of the 30S subunit head. Binds mRNA in the 70S ribosome, positioning it for translation. This is Small ribosomal subunit protein uS3 from Brucella melitensis biotype 1 (strain ATCC 23456 / CCUG 17765 / NCTC 10094 / 16M).